Here is a 263-residue protein sequence, read N- to C-terminus: MANADLDKQPDSVSSVLKVFGILQALGEEREIGITELSQRVMMSKSTVYRFLQTMKTLGYVAQEGESEKYSLTLKLFELGARALQNVDLIRSADIQMRELSRLTKETIHLGALDEDSIVYIHKIDSMYNLRMYSRIGRRNPLYSTAIGKVLLAWRDRDEVKQILEGVEYKRSTERTITSTEALLPVLDQVREQGYGEDNEEQEEGLRCIAVPVFDRFGVVIAGLSISFPTLRFSEERLQEYVAMLHTAARKISAQMGYHDYPF.

The region spanning 13–74 (VSSVLKVFGI…GESEKYSLTL (62 aa)) is the HTH iclR-type domain. Residues 34 to 53 (ITELSQRVMMSKSTVYRFLQ) constitute a DNA-binding region (H-T-H motif). Positions 89–258 (LIRSADIQMR…ARKISAQMGY (170 aa)) constitute an IclR-ED domain.

The protein localises to the cytoplasm. Its function is as follows. Transcriptional repressor that negatively regulates the expression of kdgT, kdgK and kdgA, which encode proteins involved in transport and catabolism of 2-keto-3-deoxygluconate (KDG). Also represses expression of eda, which encodes the Entner-Doudoroff aldolase, by binding to its P2 promoter region. This is HTH-type transcriptional regulator KdgR from Escherichia coli (strain K12).